The chain runs to 95 residues: Large ribosomal subunit protein uL23 (95 aa).

Belongs to the universal ribosomal protein uL23 family. Part of the 50S ribosomal subunit. Contacts protein L29, and trigger factor when it is bound to the ribosome.

Its function is as follows. One of the early assembly proteins it binds 23S rRNA. One of the proteins that surrounds the polypeptide exit tunnel on the outside of the ribosome. Forms the main docking site for trigger factor binding to the ribosome. The polypeptide is Large ribosomal subunit protein uL23 (Desulforudis audaxviator (strain MP104C)).